Reading from the N-terminus, the 114-residue chain is Large ribosomal subunit protein eL31 (114 aa).

Belongs to the eukaryotic ribosomal protein eL31 family.

This is Large ribosomal subunit protein eL31 (RPL31) from Eremothecium gossypii (strain ATCC 10895 / CBS 109.51 / FGSC 9923 / NRRL Y-1056) (Yeast).